Reading from the N-terminus, the 63-residue chain is Conotoxin Vi5.1a (63 aa).

The first 22 residues, 1–22 (MRCVPVFIILLLLIPSAPSADA), serve as a signal peptide directing secretion. Residues 23-50 (QPKTKDDVPLASYHDNAERTLQRLWNQR) constitute a propeptide that is removed on maturation. At P62 the chain carries Proline amide.

It belongs to the conotoxin T superfamily. Post-translationally, contains 2 disulfide bonds that can be either 'C1-C3, C2-C4' or 'C1-C4, C2-C3', since these disulfide connectivities have been observed for conotoxins with cysteine framework V (for examples, see AC P0DQQ7 and AC P81755). In terms of tissue distribution, expressed by the venom duct.

The protein localises to the secreted. The chain is Conotoxin Vi5.1a from Conus virgo (Virgin cone).